Here is a 314-residue protein sequence, read N- to C-terminus: Olfactory receptor 14A2 (314 aa).

The Extracellular segment spans residues 1–26; sequence MANVTLVTGFLLMGFSNIQKLRILYG. Asparagine 3 is a glycosylation site (N-linked (GlcNAc...) asparagine). Residues 27 to 47 form a helical membrane-spanning segment; it reads VLFLLIYLAALMSNLLIITLI. The Cytoplasmic portion of the chain corresponds to 48–55; sequence TLDVKLQT. The chain crosses the membrane as a helical span at residues 56-76; sequence PMYFFLKNLSFLDVFLVSVPI. Over 77 to 91 the chain is Extracellular; sequence PKFIVNNLTHNNSIS. Residue asparagine 83 is glycosylated (N-linked (GlcNAc...) asparagine). The chain crosses the membrane as a helical span at residues 92 to 112; the sequence is ILGCAFQLLLMTSFSAGEIFI. Residues cysteine 95 and cysteine 177 are joined by a disulfide bond. Residues 113 to 136 are Cytoplasmic-facing; that stretch reads LTAMSYDRYVAICCPLNYEVIMNT. Residues 137–157 form a helical membrane-spanning segment; that stretch reads GVCVLMASVSWAIGGLFGTAY. Over 158-193 the chain is Extracellular; sequence TAGTFSMPFCGSSVIPQFFCDVPSLLRISCSETLMV. Residues 194 to 214 form a helical membrane-spanning segment; sequence IYAGIGVGACLSISCFICIVI. The Cytoplasmic segment spans residues 215–237; it reads SYIYIFSTVLKIPTTKGQSKAFS. The chain crosses the membrane as a helical span at residues 238–258; sequence TCFPHLTVFTVFIITAYFVYL. At 259–267 the chain is on the extracellular side; the sequence is KPPSNSPSV. Residues 268-290 form a helical membrane-spanning segment; that stretch reads IDRLLSVIYTVMPPVFNPVTYSL. The Cytoplasmic segment spans residues 291-314; sequence RNNDMKCALIRLLQKTYGQEAYFI.

Belongs to the G-protein coupled receptor 1 family.

Its subcellular location is the cell membrane. Its function is as follows. Odorant receptor. In Homo sapiens (Human), this protein is Olfactory receptor 14A2 (OR14A2).